We begin with the raw amino-acid sequence, 2521 residues long: Piezo-type mechanosensitive ion channel component 1 (2521 aa).

Over 1-12 (MEPHVLGAVLYW) the chain is Cytoplasmic. The chain crosses the membrane as a helical span at residues 13-25 (LLLPCALLAACLL). The Extracellular segment spans residues 26–28 (RFS). The helical transmembrane segment at 29 to 44 (GLSLVYLLFLLLLPWF) threads the bilayer. The Cytoplasmic portion of the chain corresponds to 45–58 (PGPTRCGLQGHTGR). A helical membrane pass occupies residues 59–81 (LLRALLGLSLLFLVAHLALQICL). Over 82–121 (HIVPRLDQLLGPSCSRWETLSRHIGVTRLDLKDIPNAIRL) the chain is Extracellular. A helical membrane pass occupies residues 122–138 (VAPDLGILVVSSVCLGI). Residues 139–194 (CGRLARNTRQSPHPRELDDDERDVDASPTAGLQEAATLAPTRRSRLAARFRVTAHW) are Cytoplasmic-facing. The chain crosses the membrane as a helical span at residues 195 to 214 (LLVAAGRVLAVTLLALAGIA). The Extracellular portion of the chain corresponds to 215 to 216 (HP). A helical membrane pass occupies residues 217 to 236 (SALSSVYLLLFLALCTWWAC). Over 237 to 247 (HFPISTRGFSR) the chain is Cytoplasmic. A helical membrane pass occupies residues 248–268 (LCVAVGCFGAGHLICLYCYQM). Over 269 to 309 (PLAQALLPPAGIWARVLGLKDFVGPTNCSSPHALVLNTGLD) the chain is Extracellular. Asn295 carries N-linked (GlcNAc...) asparagine glycosylation. A helical membrane pass occupies residues 310–330 (WPVYASPGVLLLLCYATASLR). Residues 331 to 417 (KLRAYRPSGQ…EASPLHSLGH (87 aa)) are Cytoplasmic-facing. The chain crosses the membrane as a helical span at residues 418 to 438 (LIMDQSYVCALIAMMVWSITY). Topologically, residues 439-440 (HS) are extracellular. The chain crosses the membrane as a helical span at residues 441 to 456 (WLTFVLLLWACLIWTV). The Cytoplasmic segment spans residues 457–461 (RSRHQ). Residues 462–484 (LAMLCSPCILLYGMTLCCLRYVW) traverse the membrane as a helical segment. Topologically, residues 485-512 (AMDLRPELPTTLGPVSLRQLGLEHTRYP) are extracellular. The helical transmembrane segment at 513–530 (CLDLGAMLLYTLTFWLLL) threads the bilayer. The Cytoplasmic segment spans residues 531 to 574 (RQFVKEKLLKWAESPAALTEVTVADTEPTRTQTLLQSLGELVKG). Residues 575–595 (VYAKYWIYVCAGMFIVVSFAG) form a helical membrane-spanning segment. Residue Arg596 is a topological domain, extracellular. A helical transmembrane segment spans residues 597-617 (LVVYKIVYMFLFLLCLTLFQV). Over 618 to 627 (YYSLWRKLLK) the chain is Cytoplasmic. A helical transmembrane segment spans residues 628–649 (AFWWLVVAYTMLVLIAVYTFQF). Residues 650–679 (QDFPAYWRNLTGFTDEQLGDLGLEQFSVSE) lie on the Extracellular side of the membrane. A helical transmembrane segment spans residues 680 to 696 (LFSSILVPGFFLLACIL). Over 697 to 816 (QLHYFHRPFM…RRLLELHVFK (120 aa)) the chain is Cytoplasmic. Thr734 bears the Phosphothreonine mark. Residues 738–769 (REEQQEHQQQQQEEEEEEEDSRDEGLGVATPH) form a disordered region. Acidic residues predominate over residues 749–759 (QEEEEEEEDSR). Ser758 carries the phosphoserine modification. A helical transmembrane segment spans residues 817 to 828 (LVALYTVWVALK). At 829 to 831 (EVS) the chain is on the extracellular side. The chain crosses the membrane as a helical span at residues 832-845 (VMNLLLVVLWAFAL). Over 846–859 (PYPRFRPMASCLST) the chain is Cytoplasmic. Residues 860–874 (VWTCVIIVCKMLYQL) traverse the membrane as a helical segment. Residues 875–926 (KVVNPQEYSSNCTEPFPNSTNLLPTEISQSLLYRGPVDPANWFGVRKGFPNL) lie on the Extracellular side of the membrane. Residues 927–954 (GYIQNHLQVLLLLVFEAIVYRRQEHYRR) form a helical membrane-spanning segment. Residues 955–994 (QHQLAPLPAQAVFASGTRQQLDQDLLGCLKYFINFFFYKF) are Cytoplasmic-facing. The helical transmembrane segment at 995 to 1010 (GLEICFLMAVNVIGQR) threads the bilayer. Residues 1011-1012 (MN) are Extracellular-facing. The helical transmembrane segment at 1013-1028 (FLVTLHGCWLVAILTR) threads the bilayer. Over 1029-1041 (RHRQAIARLWPNY) the chain is Cytoplasmic. A helical transmembrane segment spans residues 1042–1057 (CLFLALFLLYQYLLCL). Residues 1058 to 1096 (GMPPALCIDYPWRWSRAVPMNSALIKWLYLPDFFRAPNS) are Extracellular-facing. Residues 1097 to 1118 (TNLISDFLLLLCASQQWQVFSA) form a helical membrane-spanning segment. Over 1119-1153 (ERTEEWQRMAGVNTDRLEPLRGEPNPVPNFIHCRS) the chain is Cytoplasmic. Residues 1154–1180 (YLDMLKVAVFRYLFWLVLVVVFVTGAT) traverse the membrane as a helical segment. Residues 1181–1185 (RISIF) lie on the Extracellular side of the membrane. Residues 1186-1204 (GLGYLLACFYLLLFGTALL) traverse the membrane as a helical segment. Residues 1205-1217 (QRDTRARLVLWDC) are Cytoplasmic-facing. Residues 1218 to 1236 (LILYNVTVIISKNMLSLLA) traverse the membrane as a helical segment. The Extracellular portion of the chain corresponds to 1237 to 1285 (CVFVEQMQTGFCWVIQLFSLVCTVKGYYDPKEMMDRDQDCLLPVEEAGI). The helical transmembrane segment at 1286–1302 (IWDSVCFFFLLLQRRVF) threads the bilayer. At 1303–1656 (LSHYYLHVRA…ELLLDRRLRI (354 aa)) the chain is on the cytoplasmic side. Positions 1339-1368 (HRRIEEKSLAQLKRQMERIRAKQEKHRQGR) form a coiled coil. Disordered stretches follow at residues 1356–1402 (RIRA…RRQW), 1462–1498 (RQQE…EAAA), and 1576–1630 (TLPG…DPGE). Low complexity predominate over residues 1385–1398 (LEPGPDSPGGSSPP). Ser1391 and Ser1396 each carry phosphoserine. Phosphoserine occurs at positions 1636 and 1646. Residues 1657-1700 (PELEEAELFAEGQGRALRLLRAVYQCVAAHSELLCYFIIILNHM) form a helical membrane-spanning segment. Over 1701-1704 (VTAS) the chain is Extracellular. A helical transmembrane segment spans residues 1705-1720 (AGSLVLPVLVFLWAML). The Cytoplasmic portion of the chain corresponds to 1721-1728 (SIPRPSKR). The chain crosses the membrane as a helical span at residues 1729-1747 (FWMTAIVFTEIAVVVKYLF). The Extracellular segment spans residues 1748-1779 (QFGFFPWNSHVVLRRYENKPYFPPRILGLEKT). A helical transmembrane segment spans residues 1780–1801 (DGYIKYDLVQLMALFFHRSQLL). The Cytoplasmic portion of the chain corresponds to 1802 to 1960 (CYGLWDHEED…HTKYRAATDV (159 aa)). Over residues 1811–1822 (DSPSKEHDKSGE) the composition is skewed to basic and acidic residues. The interval 1811-1921 (DSPSKEHDKS…RPSRSGGRVR (111 aa)) is disordered. Position 1854 is a phosphothreonine (Thr1854). Residues 1859 to 1868 (VELRPRDTRR) show a composition bias toward basic and acidic residues. The span at 1869-1878 (ISLRFRRRKK) shows a compositional bias: basic residues. Positions 1890–1903 (EAEDREEEEGEEEK) are enriched in acidic residues. Basic and acidic residues predominate over residues 1904–1913 (EAPTGREKRP). A helical transmembrane segment spans residues 1961–1980 (YALMFLADVVDFIIIIFGFW). Topologically, residues 1981-2000 (AFGKHSAATDITSSLSDDQV) are extracellular. The helical transmembrane segment at 2001-2017 (PEAFLVMLLIQFSTMVV) threads the bilayer. The Cytoplasmic segment spans residues 2018-2031 (DRALYLRKTVLGKL). Residues 2032–2052 (AFQVALVLAIHLWMFFILPAV) form a helical membrane-spanning segment. The Extracellular portion of the chain corresponds to 2053-2060 (TERMFNQN). Residues 2061–2076 (VVAQLWYFVKCIYFAL) form a helical membrane-spanning segment. The Cytoplasmic portion of the chain corresponds to 2077-2176 (SAYQIRCGYP…KKKIVKYGMG (100 aa)). Residues 2177–2197 (GLIILFLIAIIWFPLLFMSLV) traverse the membrane as a helical segment. At 2198–2431 (RSVVGVVNQP…IFSDKVSPPS (234 aa)) the chain is on the extracellular side. The N-linked (GlcNAc...) asparagine glycan is linked to Asn2294. Cys2411 and Cys2415 form a disulfide bridge. A helical membrane pass occupies residues 2432–2452 (LGFLAGYGIMGLYVSIVLVIG). The Cytoplasmic segment spans residues 2453–2521 (KFVRGFFSEI…TMIKWTREKE (69 aa)).

Belongs to the PIEZO (TC 1.A.75) family. As to quaternary structure, homotrimer; the homotrimer forms a propeller-shaped Piezo channel with a cation-ion conducting pore. Heterotrimeric interaction may occur between PIEZO1 and PIEZO2. Interacts with PKD2. Interacts with STOML3. Interacts with TMC1, TMC2, PCDH15 and CIB2; the interaction may be part of the MET complex. Interacts with MDFIC (via C-terminus); the interaction prolongs Piezo channel inactivation. Interacts with MDFI (via C-terminus); the interaction prolongs Piezo channel inactivation. As to expression, expressed in numerous tissues. In normal brain, expressed exclusively in neurons, not in astrocytes. In Alzheimer disease brains, expressed in about half of the activated astrocytes located around classical senile plaques. In Parkinson disease substantia nigra, not detected in melanin-containing neurons nor in activated astrocytes. Expressed in erythrocytes (at protein level). Expressed in myoblasts (at protein level).

The protein resides in the endoplasmic reticulum membrane. The protein localises to the endoplasmic reticulum-Golgi intermediate compartment membrane. It localises to the cell membrane. Its subcellular location is the cell projection. It is found in the lamellipodium membrane. The catalysed reaction is K(+)(in) = K(+)(out). It carries out the reaction Na(+)(in) = Na(+)(out). It catalyses the reaction Ca(2+)(in) = Ca(2+)(out). The enzyme catalyses Mg(2+)(in) = Mg(2+)(out). Regulated by auxillary subunits MDFIC and MDFI. Down-regulated by phosphatidylserines exposed on the cell surface. Divalent ions decrease the single-channel permeability of K(+). Pore-forming subunit of the mechanosensitive non-specific cation Piezo channel required for rapidly adapting mechanically activated (MA) currents and has a key role in sensing touch and tactile pain. Piezo channels are homotrimeric three-blade propeller-shaped structures that utilize a cap-motion and plug-and-latch mechanism to gate their ion-conducting pathways. Generates currents characterized by a linear current-voltage relationship that are sensitive to ruthenium red and gadolinium. Conductance to monovalent alkali ions is highest for K(+), intermediate for Na(+) and lowest for Li(+). Divalent ions except for Mn(2+) permeate the channel but more slowly than the monovalent ions and they also reduce K(+) currents. Plays a key role in epithelial cell adhesion by maintaining integrin activation through R-Ras recruitment to the ER, most probably in its activated state, and subsequent stimulation of calpain signaling. In inner ear hair cells, PIEZO1/2 subunits may constitute part of the mechanotransducer (MET) non-selective cation channel complex where they may act as pore-forming ion-conducting component in the complex. In the kidney, may contribute to the detection of intraluminal pressure changes and to urine flow sensing. Acts as a shear-stress sensor that promotes endothelial cell organization and alignment in the direction of blood flow through calpain activation. Plays a key role in blood vessel formation and vascular structure in both development and adult physiology. Acts as a sensor of phosphatidylserine (PS) flipping at the plasma membrane and governs morphogenesis of muscle cells. In myoblasts, flippase-mediated PS enrichment at the inner leaflet of plasma membrane triggers channel activation and Ca2+ influx followed by Rho GTPases signal transduction, leading to assembly of cortical actomyosin fibers and myotube formation. This chain is Piezo-type mechanosensitive ion channel component 1, found in Homo sapiens (Human).